The following is a 309-amino-acid chain: Protein FdhE (309 aa).

This sequence belongs to the FdhE family.

The protein resides in the cytoplasm. Its function is as follows. Necessary for formate dehydrogenase activity. The sequence is that of Protein FdhE from Escherichia coli O139:H28 (strain E24377A / ETEC).